We begin with the raw amino-acid sequence, 86 residues long: MANIKSQMKRIKTNEANRQRNKAVKSSLKTAIRKFREAADAGDKAKAVELQATAGRALDKAVSKGVIHSNQAANKKSAMAKRANQL.

Residues 1–25 form a disordered region; the sequence is MANIKSQMKRIKTNEANRQRNKAVK.

This sequence belongs to the bacterial ribosomal protein bS20 family.

Its function is as follows. Binds directly to 16S ribosomal RNA. The protein is Small ribosomal subunit protein bS20 of Saccharopolyspora erythraea (strain ATCC 11635 / DSM 40517 / JCM 4748 / NBRC 13426 / NCIMB 8594 / NRRL 2338).